Here is a 166-residue protein sequence, read N- to C-terminus: Specificity protein transcription factor 2 (166 aa).

A disordered region spans residues 17–45; sequence SYHHSLPSISPPDSPASTSASSSSSSIGA. Residues 31-42 show a composition bias toward low complexity; that stretch reads PASTSASSSSSS. 3 C2H2-type zinc fingers span residues 77–101, 107–131, and 137–160; these read HLCSVPGCGKTYKKTSHLRAHLRKH, FVCDWFDCGKRFDRSDQLIRHKRTH, and FACKFCIRQFSRSDHLQQHLTSVH.

Belongs to the Sp1 C2H2-type zinc-finger protein family.

Transcription factor. Probably acts downstream of the Wnt signaling pathway. This Caenorhabditis elegans protein is Specificity protein transcription factor 2.